The sequence spans 316 residues: MSATESLVAGRTRRANAGNKMRELLEKEHLRMTQQNAEIEKEDEEYNIEEEEEAERDIEISSESSDEEAELKKLEEEGEEVEKILRDEERIKKRKIQKNRAANLQRTLQPPKRPTPSAASEVPKKKYKKIKVDPSARRTSSRMHTVLMAQSTETRLQEAKPRRKYTVSASANRQKGTMTQQQRFEEAAKTEAQNLSSLRNYVHLEEQRRLRLKRNAAKHRQLREPILKFISKTISTEDGREASNYYVAPLEHPLCHSAPPLQMPQHRAVECVITGKPAIYLDPVTQLPISNVQAFQQVREVYNQRYSWSAMLNLFH.

Disordered regions lie at residues M1 to V81, K93 to Y127, and E153 to Q180. Residues K20 to R31 show a composition bias toward basic and acidic residues. A coiled-coil region spans residues K20–K95. The segment covering E40–R56 has biased composition (acidic residues). 2 positions are modified to phosphoserine: S64 and S65. The span at E70–V81 shows a compositional bias: basic and acidic residues. The span at V167–Q180 shows a compositional bias: polar residues.

The protein belongs to the VPS72/YL1 family. In terms of assembly, component of the SWR1 chromatin-remodeling complex.

Its subcellular location is the nucleus. Participates in the catalytic exchange of histone H2A for the H2A variant pht1, an euchromatin-specific factor, leading to chromatin remodeling and changes in transcription of targeted genes. The polypeptide is SWR complex protein 2 (swc2) (Schizosaccharomyces pombe (strain 972 / ATCC 24843) (Fission yeast)).